A 63-amino-acid polypeptide reads, in one-letter code: Metallothionein-2 (63 aa).

A beta region spans residues 1 to 30 (MDPQDCTCAAGDSCSCAGSCKCKNCRCQSC). Residues C6, C8, C14, C16, C20, C22, C25, C27, C30, C34, C35, C37, C38, C42, C45, C49, C51, C59, C61, and C62 each contribute to the a divalent metal cation site. Residues 31-63 (RKSCCSCCPASCSNCAKGCVCKEPSSSKCSCCH) are alpha.

It belongs to the metallothionein superfamily. Type 1 family.

Its function is as follows. Metallothioneins have a high content of cysteine residues that bind various heavy metals. This Columba livia (Rock dove) protein is Metallothionein-2.